Here is a 227-residue protein sequence, read N- to C-terminus: Ribonuclease 3 (227 aa).

Positions 5-127 (LNALQLRLQH…LIGAVYLDAG (123 aa)) constitute an RNase III domain. E40 is a Mg(2+) binding site. The active site involves D44. D113 and E116 together coordinate Mg(2+). E116 is an active-site residue. The 71-residue stretch at 154-224 (DAKTALQEWL…ATAMLELLKA (71 aa)) folds into the DRBM domain.

The protein belongs to the ribonuclease III family. As to quaternary structure, homodimer. It depends on Mg(2+) as a cofactor.

Its subcellular location is the cytoplasm. The enzyme catalyses Endonucleolytic cleavage to 5'-phosphomonoester.. Digests double-stranded RNA. Involved in the processing of primary rRNA transcript to yield the immediate precursors to the large and small rRNAs (23S and 16S). Processes some mRNAs, and tRNAs when they are encoded in the rRNA operon. Processes pre-crRNA and tracrRNA of type II CRISPR loci if present in the organism. This Delftia acidovorans (strain DSM 14801 / SPH-1) protein is Ribonuclease 3.